Reading from the N-terminus, the 525-residue chain is GMP synthase [glutamine-hydrolyzing] (525 aa).

Positions 9–207 constitute a Glutamine amidotransferase type-1 domain; sequence RILILDFGSQ…VRDICQCEAL (199 aa). The active-site Nucleophile is Cys86. Catalysis depends on residues His181 and Glu183. The GMPS ATP-PPase domain occupies 208-400; the sequence is WTPAKIIDDA…LGLPYDMLYR (193 aa). An ATP-binding site is contributed by 235–241; the sequence is SGGVDSS.

Homodimer.

It catalyses the reaction XMP + L-glutamine + ATP + H2O = GMP + L-glutamate + AMP + diphosphate + 2 H(+). It participates in purine metabolism; GMP biosynthesis; GMP from XMP (L-Gln route): step 1/1. Catalyzes the synthesis of GMP from XMP. The chain is GMP synthase [glutamine-hydrolyzing] from Shigella dysenteriae serotype 1 (strain Sd197).